The primary structure comprises 168 residues: Crossover junction endodeoxyribonuclease RuvC (168 aa).

Residues aspartate 9, glutamate 69, and aspartate 141 contribute to the active site. Residues aspartate 9, glutamate 69, and aspartate 141 each contribute to the Mg(2+) site.

Belongs to the RuvC family. As to quaternary structure, homodimer which binds Holliday junction (HJ) DNA. The HJ becomes 2-fold symmetrical on binding to RuvC with unstacked arms; it has a different conformation from HJ DNA in complex with RuvA. In the full resolvosome a probable DNA-RuvA(4)-RuvB(12)-RuvC(2) complex forms which resolves the HJ. Requires Mg(2+) as cofactor.

The protein resides in the cytoplasm. The enzyme catalyses Endonucleolytic cleavage at a junction such as a reciprocal single-stranded crossover between two homologous DNA duplexes (Holliday junction).. Its function is as follows. The RuvA-RuvB-RuvC complex processes Holliday junction (HJ) DNA during genetic recombination and DNA repair. Endonuclease that resolves HJ intermediates. Cleaves cruciform DNA by making single-stranded nicks across the HJ at symmetrical positions within the homologous arms, yielding a 5'-phosphate and a 3'-hydroxyl group; requires a central core of homology in the junction. The consensus cleavage sequence is 5'-(A/T)TT(C/G)-3'. Cleavage occurs on the 3'-side of the TT dinucleotide at the point of strand exchange. HJ branch migration catalyzed by RuvA-RuvB allows RuvC to scan DNA until it finds its consensus sequence, where it cleaves and resolves the cruciform DNA. The polypeptide is Crossover junction endodeoxyribonuclease RuvC (Bdellovibrio bacteriovorus (strain ATCC 15356 / DSM 50701 / NCIMB 9529 / HD100)).